The primary structure comprises 44 residues: DNA-directed RNA polymerase subunit Rpo12 (44 aa).

Zn(2+)-binding residues include Cys-8, Cys-22, and Cys-25.

Belongs to the archaeal Rpo12/eukaryotic RPC10 RNA polymerase subunit family. In terms of assembly, part of the RNA polymerase complex. Zn(2+) serves as cofactor.

The protein resides in the cytoplasm. It carries out the reaction RNA(n) + a ribonucleoside 5'-triphosphate = RNA(n+1) + diphosphate. DNA-dependent RNA polymerase (RNAP) catalyzes the transcription of DNA into RNA using the four ribonucleoside triphosphates as substrates. The protein is DNA-directed RNA polymerase subunit Rpo12 of Haloquadratum walsbyi (strain DSM 16790 / HBSQ001).